Consider the following 124-residue polypeptide: MEQLVYIALLGALGCLCRYFLSGLVYQVFGTSFPYGTLAVNLIGAFLIGLVMEFSVRSAAIPPTLRFAITIGFLGGLTTFSTFSFETFRLLEDGALLIAFVNVLVSVVACLTCTWIGIMVARAL.

The next 4 helical transmembrane spans lie at 5–25, 32–52, 67–87, and 96–116; these read VYIA…SGLV, SFPY…GLVM, FAIT…SFET, and LLIA…CTWI. Na(+) contacts are provided by G75 and T78.

This sequence belongs to the fluoride channel Fluc/FEX (TC 1.A.43) family.

It is found in the cell inner membrane. It catalyses the reaction fluoride(in) = fluoride(out). Na(+) is not transported, but it plays an essential structural role and its presence is essential for fluoride channel function. Its function is as follows. Fluoride-specific ion channel. Important for reducing fluoride concentration in the cell, thus reducing its toxicity. The chain is Fluoride-specific ion channel FluC from Geobacter sp. (strain M21).